We begin with the raw amino-acid sequence, 138 residues long: NADH-quinone oxidoreductase subunit A 1 (138 aa).

Transmembrane regions (helical) follow at residues 19–39, 74–94, and 103–123; these read FLPL…LLLA, FYLI…IFAW, and LAGL…LVWL.

Belongs to the complex I subunit 3 family. NDH-1 is composed of 14 different subunits. Subunits NuoA, H, J, K, L, M, N constitute the membrane sector of the complex.

Its subcellular location is the cell inner membrane. The enzyme catalyses a quinone + NADH + 5 H(+)(in) = a quinol + NAD(+) + 4 H(+)(out). Its function is as follows. NDH-1 shuttles electrons from NADH, via FMN and iron-sulfur (Fe-S) centers, to quinones in the respiratory chain. The immediate electron acceptor for the enzyme in this species is believed to be ubiquinone. Couples the redox reaction to proton translocation (for every two electrons transferred, four hydrogen ions are translocated across the cytoplasmic membrane), and thus conserves the redox energy in a proton gradient. The protein is NADH-quinone oxidoreductase subunit A 1 of Geobacter metallireducens (strain ATCC 53774 / DSM 7210 / GS-15).